The chain runs to 215 residues: Probable phosphoglycerate mutase GpmB (215 aa).

Substrate contacts are provided by residues 8-15 (RHGETEWN), 21-22 (QG), Arg-58, Arg-60, 82-85 (ELHM), and 151-152 (GI). His-9 (tele-phosphohistidine intermediate) is an active-site residue. Catalysis depends on Glu-82, which acts as the Proton donor/acceptor.

The protein belongs to the phosphoglycerate mutase family. GpmB subfamily.

It carries out the reaction (2R)-2-phosphoglycerate = (2R)-3-phosphoglycerate. The protein operates within carbohydrate degradation; glycolysis; pyruvate from D-glyceraldehyde 3-phosphate: step 3/5. This chain is Probable phosphoglycerate mutase GpmB, found in Serratia proteamaculans (strain 568).